The primary structure comprises 444 residues: MSVIHPLQNLLTSRDGSLVFAIIKNCILSFKYQSPNHWEFAGKWSDDFDKIQESRNTTAKEQQGQSSENENENKKLKSNKGDSIKRTAAKVPSPGLGAPPIYSYIRNLRLTSDESRLIACADSDKSLLVFDVDKTSKNVLKLRKRFCFSKRPNAISIAEDDTTVIIADKFGDVYSIDINSIPEEKFTQEPILGHVSMLTDVHLIKDSDGHQFIITSDRDEHIKISHYPQCFIVDKWLFGHKHFVSSICCGKDYLLLSAGGDDKIFAWDWKTGKNLSTFDYSSLIKPYLNDQHLAPPRFQNENNDIIEFAVSKIIKSKNLPFVAFFVEATKCIIILEMSEKQKGDLALKQIITFPYNVISLSAHNDEFQVTLDNKESSGVQKNFAKFIEYNLNENSFVVNNEKSNEFDSAIIQSVQGDSNLVTKKEEIYPLYNVSSLRKHGEHYS.

WD repeat units follow at residues 1–47 (MSVI…WSDD), 48–99 (FDKI…LGAP), 100–147 (PIYS…KRFC), 148–192 (FSKR…EPIL), 193–237 (GHVS…DKWL), 238–279 (FGHK…STFD), and 308–354 (FAVS…ITFP). Residues 55 to 92 (RNTTAKEQQGQSSENENENKKLKSNKGDSIKRTAAKVP) are disordered. Positions 71-85 (NENKKLKSNKGDSIK) are enriched in basic and acidic residues. Ser93 carries the post-translational modification Phosphoserine.

Belongs to the WD repeat TRM82 family. In terms of assembly, forms a heterodimer with the catalytic subunit TRM8.

The protein resides in the nucleus. It participates in tRNA modification; N(7)-methylguanine-tRNA biosynthesis. Required for the formation of N(7)-methylguanine at position 46 (m7G46) in tRNA, a modification required to maintain stability of tRNAs; its absence resulting in tRNA decay. In the complex, it is required to stabilize and induce conformational changes of the catalytic subunit. The chain is tRNA (guanine-N(7)-)-methyltransferase non-catalytic subunit TRM82 from Saccharomyces cerevisiae (strain RM11-1a) (Baker's yeast).